A 341-amino-acid chain; its full sequence is UDP-glucuronic acid decarboxylase 5 (341 aa).

Residues 1–21 (MASSDKQTSPKPPPSPSPLRN) form a disordered region. Position 60 to 85 (60 to 85 (DNYFTGSKDNLKKWIGHPRFELIRHD)) interacts with NAD(+). R169 lines the substrate pocket. Catalysis depends on Y172, which acts as the Proton acceptor. 172–176 (YDEGK) serves as a coordination point for NAD(+). Residue N201 coordinates substrate. R213 provides a ligand contact to NAD(+). Substrate contacts are provided by residues 214-218 (VVSNF), 231-238 (QKPGTQTR), and 298-302 (DPRQR).

Belongs to the NAD(P)-dependent epimerase/dehydratase family. UDP-glucuronic acid decarboxylase subfamily. NAD(+) is required as a cofactor.

The protein resides in the cytoplasm. The catalysed reaction is UDP-alpha-D-glucuronate + H(+) = UDP-alpha-D-xylose + CO2. It participates in nucleotide-sugar biosynthesis; UDP-alpha-D-xylose biosynthesis; UDP-alpha-D-xylose from UDP-alpha-D-glucuronate: step 1/1. Its function is as follows. Catalyzes the NAD-dependent decarboxylation of UDP-glucuronic acid to UDP-xylose. Necessary for the biosynthesis of the core tetrasaccharide in glycosaminoglycan biosynthesis. The protein is UDP-glucuronic acid decarboxylase 5 (UXS5) of Arabidopsis thaliana (Mouse-ear cress).